Reading from the N-terminus, the 112-residue chain is MGVKAYLDGILGEDKACKFLKKQGFEILKRNFHSKFGEIDIIAKKDEILHFIEVKFTQNDYEVSERLDRKKLEKILKTIEFYHLKNGISSDFQIDLICIKNDVIQFCENISF.

This sequence belongs to the UPF0102 family.

The polypeptide is UPF0102 protein C8J_0145 (Campylobacter jejuni subsp. jejuni serotype O:6 (strain 81116 / NCTC 11828)).